The chain runs to 394 residues: Phosphopentomutase (394 aa).

6 residues coordinate Mn(2+): D14, D287, H292, D328, H329, and H340.

It belongs to the phosphopentomutase family. Mn(2+) serves as cofactor.

Its subcellular location is the cytoplasm. It carries out the reaction 2-deoxy-alpha-D-ribose 1-phosphate = 2-deoxy-D-ribose 5-phosphate. The catalysed reaction is alpha-D-ribose 1-phosphate = D-ribose 5-phosphate. It participates in carbohydrate degradation; 2-deoxy-D-ribose 1-phosphate degradation; D-glyceraldehyde 3-phosphate and acetaldehyde from 2-deoxy-alpha-D-ribose 1-phosphate: step 1/2. Isomerase that catalyzes the conversion of deoxy-ribose 1-phosphate (dRib-1-P) and ribose 1-phosphate (Rib-1-P) to deoxy-ribose 5-phosphate (dRib-5-P) and ribose 5-phosphate (Rib-5-P), respectively. The polypeptide is Phosphopentomutase (Listeria monocytogenes serotype 4a (strain HCC23)).